The primary structure comprises 396 residues: Maltose/maltodextrin-binding periplasmic protein (396 aa).

An N-terminal signal peptide occupies residues methionine 1–alanine 26.

Belongs to the bacterial solute-binding protein 1 family. The complex is composed of two ATP-binding proteins (MalK), two transmembrane proteins (MalG and MalF) and a solute-binding protein (MalE).

Its subcellular location is the periplasm. Part of the ABC transporter complex MalEFGK involved in maltose/maltodextrin import. Binds maltose and higher maltodextrins. The sequence is that of Maltose/maltodextrin-binding periplasmic protein (malE) from Escherichia coli O157:H7.